Consider the following 362-residue polypeptide: 3-dehydroquinate synthase (362 aa).

Residues 72 to 77 (DGEQYK), 106 to 110 (GVVGD), 130 to 131 (TT), Lys143, Lys152, and 170 to 173 (CLKT) contribute to the NAD(+) site. Residues Glu185, His248, and His265 each coordinate Zn(2+).

This sequence belongs to the sugar phosphate cyclases superfamily. Dehydroquinate synthase family. Requires Co(2+) as cofactor. Zn(2+) is required as a cofactor. The cofactor is NAD(+).

The protein resides in the cytoplasm. It carries out the reaction 7-phospho-2-dehydro-3-deoxy-D-arabino-heptonate = 3-dehydroquinate + phosphate. The protein operates within metabolic intermediate biosynthesis; chorismate biosynthesis; chorismate from D-erythrose 4-phosphate and phosphoenolpyruvate: step 2/7. Functionally, catalyzes the conversion of 3-deoxy-D-arabino-heptulosonate 7-phosphate (DAHP) to dehydroquinate (DHQ). This Aliivibrio fischeri (strain ATCC 700601 / ES114) (Vibrio fischeri) protein is 3-dehydroquinate synthase.